The primary structure comprises 512 residues: Sodium-dependent phosphate transport protein 1, chloroplastic (512 aa).

Residues 1-59 (MNARALLCSSNIHSLYTSNRPPEKTSSSRSLRNLKPSPKSLRVWIYPRNRSSVFRVLVR) constitute a chloroplast transit peptide. The next 11 helical transmembrane spans lie at 103–123 (WVIV…RVNM), 141–161 (VGLI…AGGI), 171–191 (VLGF…VAAK), 192–212 (LGLP…GVAM), 234–254 (LVYS…PFLI), 257–277 (FGWP…LTLW), 323–343 (VWAL…LLTW), 361–381 (LLSV…GWIA), 401–421 (IGFL…SPTM), 453–473 (GVLL…GTAA), and 486–506 (VFTI…LFST).

It belongs to the major facilitator superfamily. Sodium/anion cotransporter (TC 2.A.1.14) family. In terms of tissue distribution, expressed in flower buds, sepals of mature flowers and mature leaves, less in senescent leaves and at low levels in roots.

The protein localises to the plastid. It is found in the chloroplast thylakoid membrane. Specific for inorganic phosphate transport across the thylakoid membrane in a sodium dependent manner. Binds glutamate but cannot transport it. May act as an ascorbate transporter at the thylakoid membrane. This chain is Sodium-dependent phosphate transport protein 1, chloroplastic (ANTR1), found in Arabidopsis thaliana (Mouse-ear cress).